Reading from the N-terminus, the 640-residue chain is UvrABC system protein C (640 aa).

The GIY-YIG domain maps to 35-113 (DAPGVYRMIG…IKQLKPRFNV (79 aa)). A UVR domain is found at 223-258 (RAVMATMAKAMEEAAEELEFERAARLRDRIRALSAV).

Belongs to the UvrC family. Interacts with UvrB in an incision complex.

The protein resides in the cytoplasm. The UvrABC repair system catalyzes the recognition and processing of DNA lesions. UvrC both incises the 5' and 3' sides of the lesion. The N-terminal half is responsible for the 3' incision and the C-terminal half is responsible for the 5' incision. The sequence is that of UvrABC system protein C from Caulobacter vibrioides (strain ATCC 19089 / CIP 103742 / CB 15) (Caulobacter crescentus).